We begin with the raw amino-acid sequence, 543 residues long: Hydroxylamine reductase (543 aa).

Positions 3, 6, 15, and 21 each coordinate [4Fe-4S] cluster. 8 residues coordinate hybrid [4Fe-2O-2S] cluster: histidine 239, glutamate 263, cysteine 307, cysteine 398, cysteine 426, cysteine 451, glutamate 486, and lysine 488. At cysteine 398 the chain carries Cysteine persulfide.

This sequence belongs to the HCP family. The cofactor is [4Fe-4S] cluster. Requires hybrid [4Fe-2O-2S] cluster as cofactor.

It localises to the cytoplasm. The catalysed reaction is A + NH4(+) + H2O = hydroxylamine + AH2 + H(+). Functionally, catalyzes the reduction of hydroxylamine to form NH(3) and H(2)O. The polypeptide is Hydroxylamine reductase (Methanococcus vannielii (strain ATCC 35089 / DSM 1224 / JCM 13029 / OCM 148 / SB)).